Reading from the N-terminus, the 467-residue chain is Membrane-bound acylglycerophosphatidylinositol O-acyltransferase mboat7 (467 aa).

At 1 to 5 (MSPDE) the chain is on the cytoplasmic side. The helical transmembrane segment at 6 to 22 (LVYLGILAATIPVGFLF) threads the bilayer. Over 23–33 (RYLSPPVKQGA) the chain is Lumenal. The helical transmembrane segment at 34 to 57 (ALLLGLIISIATCGIHTLHSLCTV) threads the bilayer. Residues 58–73 (LGTWIIIKINWRSAPA) are Cytoplasmic-facing. Residues 74–93 (LSLAWTFLYLLFFRLVTWFG) form a helical membrane-spanning segment. The Lumenal segment spans residues 94-193 (LPQPTPFANA…LPGKEPCLQR (100 aa)). A helical transmembrane segment spans residues 194 to 211 (LKMVPVYGLLFIAVNSVF). At 212-230 (PLSYVRTEDFLEHNYFYRF) the chain is on the cytoplasmic side. A helical transmembrane segment spans residues 231 to 260 (FYMVAIFFVFRMRFYSAWCGAEAGCISAGL). At 261–421 (GCYPQGALSK…LKASDTISYW (161 aa)) the chain is on the lumenal side. An N-linked (GlcNAc...) asparagine glycan is attached at Asn-316. The chain crosses the membrane as a helical span at residues 422–442 (SSIYFVIHIIAIVCIAVGQFM). Residues 443-467 (KGGRKREKRERGEGEKEDAVREKAE) are Cytoplasmic-facing. Residues 447-467 (KREKRERGEGEKEDAVREKAE) are disordered. Basic and acidic residues predominate over residues 451–467 (RERGEGEKEDAVREKAE).

It belongs to the membrane-bound acyltransferase family.

The protein resides in the endoplasmic reticulum membrane. The enzyme catalyses a 1-acyl-sn-glycero-3-phospho-(1D-myo-inositol) + (5Z,8Z,11Z,14Z)-eicosatetraenoyl-CoA = a 1-acyl-2-(5Z,8Z,11Z,14Z-eicosatetraenoyl)-sn-glycero-3-phospho-(1D-myo-inositol) + CoA. It catalyses the reaction (5Z,8Z,11Z,14Z)-eicosatetraenoyl-CoA + 1-hexadecanoyl-sn-glycero-3-phosphocholine = 1-hexadecanoyl-2-(5Z,8Z,11Z,14Z-eicosatetraenoyl)-sn-glycero-3-phosphocholine + CoA. It carries out the reaction a 1-acyl-sn-glycero-3-phospho-(1D-myo-inositol) + an acyl-CoA = a 1,2-diacyl-sn-glycero-3-phospho-(1D-myo-inositol) + CoA. The catalysed reaction is 1-octadecanoyl-sn-glycero-3-phospho-(1D-myo-inositol) + (5Z,8Z,11Z,14Z)-eicosatetraenoyl-CoA = 1-octadecanoyl-2-(5Z,8Z,11Z,14Z-eicosatetraenoyl)-sn-glycero-3-phospho-(1D-myo-inositol) + CoA. It participates in lipid metabolism; phospholipid metabolism. Acyltransferase which catalyzes the transfer of an acyl group from an acyl-CoA to a lysophosphatidylinositol (1-acylglycerophosphatidylinositol or LPI) leading to the production of a phosphatidylinositol (1,2-diacyl-sn-glycero-3-phosphoinositol or PI) and participates in the reacylation step of the phospholipid remodeling pathway also known as the Lands cycle. Prefers arachidonoyl-CoA as the acyl donor, thus contributing to the regulation of free levels arachidonic acid in cell. The protein is Membrane-bound acylglycerophosphatidylinositol O-acyltransferase mboat7 (mboat7) of Danio rerio (Zebrafish).